A 320-amino-acid polypeptide reads, in one-letter code: Malate dehydrogenase (320 aa).

NAD(+) is bound by residues 10 to 15 (GAGQIG) and Asp34. Substrate contacts are provided by Arg83 and Arg89. Residues Asn96 and 119-121 (ITN) contribute to the NAD(+) site. Residues Asn121 and Arg152 each contribute to the substrate site. His176 functions as the Proton acceptor in the catalytic mechanism.

Belongs to the LDH/MDH superfamily. MDH type 3 family.

It carries out the reaction (S)-malate + NAD(+) = oxaloacetate + NADH + H(+). Catalyzes the reversible oxidation of malate to oxaloacetate. The chain is Malate dehydrogenase from Methylorubrum extorquens (strain CM4 / NCIMB 13688) (Methylobacterium extorquens).